A 145-amino-acid chain; its full sequence is MFMGEHQHSIDPKGRLFIPARFREGLGNRFVLTKGLDGCLFAYPLPEWEALEQKLKSLPFTRGDARAFVRFFFSGAVECEADKQGRILIPLNLREYARLEKEAVIIGVSSRVEIWAKDQWEHYKGQAASSYEEIAEKIVDLNLGI.

SpoVT-AbrB domains lie at 5 to 47 (EHQH…PLPE) and 76 to 119 (AVEC…AKDQ).

It belongs to the MraZ family. As to quaternary structure, forms oligomers.

The protein resides in the cytoplasm. It localises to the nucleoid. In Pelotomaculum thermopropionicum (strain DSM 13744 / JCM 10971 / SI), this protein is Transcriptional regulator MraZ.